Here is a 366-residue protein sequence, read N- to C-terminus: Quinolinate synthase (366 aa).

The iminosuccinate site is built by H44 and S61. Residue C108 coordinates [4Fe-4S] cluster. Residues 139–141 (YIN) and S160 each bind iminosuccinate. C228 contacts [4Fe-4S] cluster. Residues 254–256 (HPE) and T271 contribute to the iminosuccinate site. C318 contributes to the [4Fe-4S] cluster binding site.

The protein belongs to the quinolinate synthase family. Type 3 subfamily. The cofactor is [4Fe-4S] cluster.

Its subcellular location is the cytoplasm. The enzyme catalyses iminosuccinate + dihydroxyacetone phosphate = quinolinate + phosphate + 2 H2O + H(+). It participates in cofactor biosynthesis; NAD(+) biosynthesis; quinolinate from iminoaspartate: step 1/1. Its function is as follows. Catalyzes the condensation of iminoaspartate with dihydroxyacetone phosphate to form quinolinate. The protein is Quinolinate synthase of Listeria monocytogenes serovar 1/2a (strain ATCC BAA-679 / EGD-e).